Reading from the N-terminus, the 370-residue chain is Histidinol-phosphate aminotransferase (370 aa).

At Lys229 the chain carries N6-(pyridoxal phosphate)lysine.

This sequence belongs to the class-II pyridoxal-phosphate-dependent aminotransferase family. Histidinol-phosphate aminotransferase subfamily. Homodimer. Requires pyridoxal 5'-phosphate as cofactor.

It carries out the reaction L-histidinol phosphate + 2-oxoglutarate = 3-(imidazol-4-yl)-2-oxopropyl phosphate + L-glutamate. It functions in the pathway amino-acid biosynthesis; L-histidine biosynthesis; L-histidine from 5-phospho-alpha-D-ribose 1-diphosphate: step 7/9. The chain is Histidinol-phosphate aminotransferase from Helicobacter hepaticus (strain ATCC 51449 / 3B1).